The chain runs to 160 residues: Major strawberry allergen Fra a 1.08 (160 aa).

The protein belongs to the BetVI family. Phosphorylated in vivo. Phosphorylation prevents its activity as ribonuclease. Highly expressed in roots. Expressed a low levels in ripe red fruits.

In terms of biological role, possesses ribonuclease activity in vitro. The polypeptide is Major strawberry allergen Fra a 1.08 (Fragaria ananassa (Strawberry)).